The primary structure comprises 305 residues: Oxygen-dependent coproporphyrinogen-III oxidase (305 aa).

Substrate is bound at residue Ser-98. The a divalent metal cation site is built by His-102 and His-112. His-112 (proton donor) is an active-site residue. Asn-114 to Arg-116 serves as a coordination point for substrate. Positions 151 and 181 each coordinate a divalent metal cation. The interval Tyr-246 to Glu-281 is important for dimerization. Gly-264–Arg-266 contributes to the substrate binding site.

This sequence belongs to the aerobic coproporphyrinogen-III oxidase family. In terms of assembly, homodimer. A divalent metal cation is required as a cofactor.

It is found in the cytoplasm. The catalysed reaction is coproporphyrinogen III + O2 + 2 H(+) = protoporphyrinogen IX + 2 CO2 + 2 H2O. It participates in porphyrin-containing compound metabolism; protoporphyrin-IX biosynthesis; protoporphyrinogen-IX from coproporphyrinogen-III (O2 route): step 1/1. Involved in the heme biosynthesis. Catalyzes the aerobic oxidative decarboxylation of propionate groups of rings A and B of coproporphyrinogen-III to yield the vinyl groups in protoporphyrinogen-IX. The protein is Oxygen-dependent coproporphyrinogen-III oxidase of Vibrio parahaemolyticus serotype O3:K6 (strain RIMD 2210633).